We begin with the raw amino-acid sequence, 65 residues long: Large ribosomal subunit protein uL30 (65 aa).

This sequence belongs to the universal ribosomal protein uL30 family. As to quaternary structure, part of the 50S ribosomal subunit.

The sequence is that of Large ribosomal subunit protein uL30 from Mycobacterium bovis (strain ATCC BAA-935 / AF2122/97).